A 163-amino-acid chain; its full sequence is Crossover junction endodeoxyribonuclease RuvC (163 aa).

Residues Asp9, Glu76, and Asp148 contribute to the active site. Residues Asp9, Glu76, and Asp148 each contribute to the Mg(2+) site.

Belongs to the RuvC family. As to quaternary structure, homodimer which binds Holliday junction (HJ) DNA. The HJ becomes 2-fold symmetrical on binding to RuvC with unstacked arms; it has a different conformation from HJ DNA in complex with RuvA. In the full resolvosome a probable DNA-RuvA(4)-RuvB(12)-RuvC(2) complex forms which resolves the HJ. It depends on Mg(2+) as a cofactor.

The protein resides in the cytoplasm. It catalyses the reaction Endonucleolytic cleavage at a junction such as a reciprocal single-stranded crossover between two homologous DNA duplexes (Holliday junction).. In terms of biological role, the RuvA-RuvB-RuvC complex processes Holliday junction (HJ) DNA during genetic recombination and DNA repair. Endonuclease that resolves HJ intermediates. Cleaves cruciform DNA by making single-stranded nicks across the HJ at symmetrical positions within the homologous arms, yielding a 5'-phosphate and a 3'-hydroxyl group; requires a central core of homology in the junction. The consensus cleavage sequence is 5'-(A/T)TT(C/G)-3'. Cleavage occurs on the 3'-side of the TT dinucleotide at the point of strand exchange. HJ branch migration catalyzed by RuvA-RuvB allows RuvC to scan DNA until it finds its consensus sequence, where it cleaves and resolves the cruciform DNA. This chain is Crossover junction endodeoxyribonuclease RuvC, found in Trichormus variabilis (strain ATCC 29413 / PCC 7937) (Anabaena variabilis).